The sequence spans 317 residues: Metaxin-1 (317 aa).

Glycyl lysine isopeptide (Lys-Gly) (interchain with G-Cter in ubiquitin) cross-links involve residues Lys-38, Lys-41, and Lys-78. A helical transmembrane segment spans residues Glu-164–Arg-184.

Belongs to the metaxin family. Interacts with MTX2/metaxin-2. Associates with the mitochondrial contact site and cristae organizing system (MICOS) complex, composed of at least MICOS10/MIC10, CHCHD3/MIC19, CHCHD6/MIC25, APOOL/MIC27, IMMT/MIC60, APOO/MIC23/MIC26 and QIL1/MIC13. This complex was also known under the names MINOS or MitOS complex. The MICOS complex associates with mitochondrial outer membrane proteins SAMM50, MTX1 and MTX2 (together described as components of the mitochondrial outer membrane sorting assembly machinery (SAM) complex) and DNAJC11, mitochondrial inner membrane protein TMEM11 and with HSPA9. The MICOS and SAM complexes together with DNAJC11 are part of a large protein complex spanning both membranes termed the mitochondrial intermembrane space bridging (MIB) complex. Interacts with ARMC1. Ubiquitinated by PRKN during mitophagy, leading to its degradation and enhancement of mitophagy. Deubiquitinated by USP30.

The protein localises to the mitochondrion outer membrane. In terms of biological role, involved in transport of proteins into the mitochondrion. Essential for embryonic development. This Sus scrofa (Pig) protein is Metaxin-1 (MTX1).